A 416-amino-acid chain; its full sequence is Phosphoglycerate kinase (416 aa).

Positions 23, 24, 25, 26, 39, 40, 63, 64, 66, 67, 122, 123, 170, and 171 each coordinate (2R)-3-phosphoglycerate. G214 is an ADP binding site. G214 contacts CDP. The AMP site is built by A215 and K216. ATP is bound at residue A215. A215 contacts Mg(2+). D219 provides a ligand contact to CDP. Residue D219 coordinates Mg(2+). Residue K220 participates in AMP binding. K220 serves as a coordination point for ATP. An ADP-binding site is contributed by G238. G238 is a binding site for CDP. AMP is bound by residues G239 and G312. Residues G239 and G312 each contribute to the ATP site. Residues G337, A339, and F342 each contribute to the CDP site. Residue F342 participates in ADP binding. AMP is bound at residue E343. Positions 343, 374, and 375 each coordinate ATP. Residue D374 coordinates Mg(2+).

This sequence belongs to the phosphoglycerate kinase family. As to quaternary structure, monomer. It depends on Mg(2+) as a cofactor.

The protein resides in the cytoplasm. The protein localises to the mitochondrion. The enzyme catalyses (2R)-3-phosphoglycerate + ATP = (2R)-3-phospho-glyceroyl phosphate + ADP. Its pathway is carbohydrate degradation; glycolysis; pyruvate from D-glyceraldehyde 3-phosphate: step 2/5. Functionally, catalyzes one of the two ATP producing reactions in the glycolytic pathway via the reversible conversion of 1,3-diphosphoglycerate to 3-phosphoglycerate. Both L- and D- forms of purine and pyrimidine nucleotides can be used as substrates, but the activity is much lower on pyrimidines. Negatively regulates the biosynthesis of acetyl-CoA from pyruvate in the mitochondrion. This Hypocrea jecorina (Trichoderma reesei) protein is Phosphoglycerate kinase (pgk1).